Reading from the N-terminus, the 334-residue chain is Holliday junction branch migration complex subunit RuvB (334 aa).

Residues 1 to 182 (MDDRMIDGEL…FGVLSRLEYY (182 aa)) are large ATPase domain (RuvB-L). Residues Leu21, Arg22, Gly63, Lys66, Thr67, Thr68, 129 to 131 (EDF), Arg172, Tyr182, and Arg219 contribute to the ATP site. Thr67 contributes to the Mg(2+) binding site. The interval 183-253 (EIKDLCNIVE…STKQALEMLQ (71 aa)) is small ATPAse domain (RuvB-S). The interval 256-334 (DAGLDHVDHK…HLGIKRTGED (79 aa)) is head domain (RuvB-H). 2 residues coordinate DNA: Arg311 and Arg316.

This sequence belongs to the RuvB family. Homohexamer. Forms an RuvA(8)-RuvB(12)-Holliday junction (HJ) complex. HJ DNA is sandwiched between 2 RuvA tetramers; dsDNA enters through RuvA and exits via RuvB. An RuvB hexamer assembles on each DNA strand where it exits the tetramer. Each RuvB hexamer is contacted by two RuvA subunits (via domain III) on 2 adjacent RuvB subunits; this complex drives branch migration. In the full resolvosome a probable DNA-RuvA(4)-RuvB(12)-RuvC(2) complex forms which resolves the HJ.

Its subcellular location is the cytoplasm. It catalyses the reaction ATP + H2O = ADP + phosphate + H(+). The RuvA-RuvB-RuvC complex processes Holliday junction (HJ) DNA during genetic recombination and DNA repair, while the RuvA-RuvB complex plays an important role in the rescue of blocked DNA replication forks via replication fork reversal (RFR). RuvA specifically binds to HJ cruciform DNA, conferring on it an open structure. The RuvB hexamer acts as an ATP-dependent pump, pulling dsDNA into and through the RuvAB complex. RuvB forms 2 homohexamers on either side of HJ DNA bound by 1 or 2 RuvA tetramers; 4 subunits per hexamer contact DNA at a time. Coordinated motions by a converter formed by DNA-disengaged RuvB subunits stimulates ATP hydrolysis and nucleotide exchange. Immobilization of the converter enables RuvB to convert the ATP-contained energy into a lever motion, pulling 2 nucleotides of DNA out of the RuvA tetramer per ATP hydrolyzed, thus driving DNA branch migration. The RuvB motors rotate together with the DNA substrate, which together with the progressing nucleotide cycle form the mechanistic basis for DNA recombination by continuous HJ branch migration. Branch migration allows RuvC to scan DNA until it finds its consensus sequence, where it cleaves and resolves cruciform DNA. This Oceanobacillus iheyensis (strain DSM 14371 / CIP 107618 / JCM 11309 / KCTC 3954 / HTE831) protein is Holliday junction branch migration complex subunit RuvB.